The primary structure comprises 362 residues: Ribosomal RNA large subunit methyltransferase F (362 aa).

The segment covering 1-28 (MNTPLKPKHGQKTNRKPKANKPVVKKQQ) has biased composition (basic residues). The disordered stretch occupies residues 1 to 40 (MNTPLKPKHGQKTNRKPKANKPVVKKQQTKQPPTHKVQGE).

It belongs to the methyltransferase superfamily. METTL16/RlmF family.

The protein resides in the cytoplasm. The enzyme catalyses adenosine(1618) in 23S rRNA + S-adenosyl-L-methionine = N(6)-methyladenosine(1618) in 23S rRNA + S-adenosyl-L-homocysteine + H(+). Functionally, specifically methylates the adenine in position 1618 of 23S rRNA. This Vibrio cholerae serotype O1 (strain M66-2) protein is Ribosomal RNA large subunit methyltransferase F.